Consider the following 969-residue polypeptide: Leucine--tRNA ligase (969 aa).

The 'HIGH' region signature appears at 46-56; sequence PYLNGVLHAGH. The 'KMSKS' region motif lies at 658-662; the sequence is KLSKS. K661 serves as a coordination point for ATP.

The protein belongs to the class-I aminoacyl-tRNA synthetase family.

Its subcellular location is the cytoplasm. The enzyme catalyses tRNA(Leu) + L-leucine + ATP = L-leucyl-tRNA(Leu) + AMP + diphosphate. This chain is Leucine--tRNA ligase, found in Methanococcus aeolicus (strain ATCC BAA-1280 / DSM 17508 / OCM 812 / Nankai-3).